The sequence spans 437 residues: Asparagine--tRNA ligase (437 aa).

The protein belongs to the class-II aminoacyl-tRNA synthetase family. In terms of assembly, homodimer.

Its subcellular location is the cytoplasm. It catalyses the reaction tRNA(Asn) + L-asparagine + ATP = L-asparaginyl-tRNA(Asn) + AMP + diphosphate + H(+). This Symbiobacterium thermophilum (strain DSM 24528 / JCM 14929 / IAM 14863 / T) protein is Asparagine--tRNA ligase.